The primary structure comprises 357 residues: D-amino-acid oxidase (357 aa).

Positions 13, 14, 42, 47, 289, 315, and 318 each coordinate FAD. Arg-289 lines the D-proline pocket. Arg-289 provides a ligand contact to D-serine.

It belongs to the DAMOX/DASOX family. Requires FAD as cofactor.

Its subcellular location is the cytoplasm. It localises to the secreted. It is found in the cell wall. It carries out the reaction a D-alpha-amino acid + O2 + H2O = a 2-oxocarboxylate + H2O2 + NH4(+). It catalyses the reaction D-phenylalanine + O2 + H2O = 3-phenylpyruvate + H2O2 + NH4(+). The enzyme catalyses D-lysine + O2 + H2O = 6-amino-2-oxohexanoate + H2O2 + NH4(+). The catalysed reaction is D-methionine + O2 + H2O = 4-methylsulfanyl-2-oxobutanoate + H2O2 + NH4(+). It carries out the reaction D-arginine + O2 + H2O = 5-guanidino-2-oxopentanoate + H2O2 + NH4(+). It catalyses the reaction D-ornithine + O2 + H2O = 5-amino-2-oxopentanoate + H2O2 + NH4(+). The enzyme catalyses D-leucine + O2 + H2O = 4-methyl-2-oxopentanoate + H2O2 + NH4(+). The catalysed reaction is D-histidine + O2 + H2O = 3-(imidazol-5-yl)pyruvate + H2O2 + NH4(+). With respect to regulation, activated by manganese, copper, and iron ions. Inhibited by barium, aluminum, and zinc ions. Functionally, catalyzes the oxidative deamination of D-amino acids with broad substrate specificity. In Unknown prokaryotic organism, this protein is D-amino-acid oxidase.